The primary structure comprises 138 residues: Large ribosomal subunit protein uL16 (138 aa).

Over residues 1–13 the composition is skewed to basic residues; that stretch reads MLQPARRKFRKEQ. The interval 1–22 is disordered; it reads MLQPARRKFRKEQKGRNTGVAT.

It belongs to the universal ribosomal protein uL16 family. Part of the 50S ribosomal subunit.

Functionally, binds 23S rRNA and is also seen to make contacts with the A and possibly P site tRNAs. The sequence is that of Large ribosomal subunit protein uL16 from Acidovorax ebreus (strain TPSY) (Diaphorobacter sp. (strain TPSY)).